The following is a 410-amino-acid chain: Mating-type locus allele B1 protein (410 aa).

The variable domain between B alleles stretch occupies residues 1-110 (MSSDPNFSLI…FNVVSPDVGC (110 aa)). Residues 107–184 (DVGCRNLSED…NARRRSGWSH (78 aa)) constitute a DNA-binding region (homeobox; TALE-type). A highly conserved between B alleles region spans residues 111 to 410 (RNLSEDLPAY…PFLCLSVAFV (300 aa)). 3 disordered regions span residues 202–239 (RAKL…PLTP), 278–335 (TPKP…TPEL), and 374–395 (ARGN…PDEV). Positions 205-233 (LSSSNQSTPPSSTSDSLSNNLDDVLSDNL) are enriched in low complexity. The Nuclear localization signal motif lies at 276–308 (KKTPKPGMPRPVTTVAKRHPARKTKPAAKPKSR). Residues 291-307 (AKRHPARKTKPAAKPKS) show a composition bias toward basic residues. Positions 312 to 335 (PRASTTPSIDSTLDSSKLESTPEL) are enriched in polar residues. The not essential for B1 function stretch occupies residues 333–410 (PELSMCSTAD…PFLCLSVAFV (78 aa)). Residues 375-388 (RGNRKVKALPKRAG) are compositionally biased toward basic residues.

The protein belongs to the TALE/M-ATYP homeobox family.

The protein resides in the nucleus. In terms of biological role, the B locus has at least 25 alleles, and any combination of two different B alleles yields a multimeric regulatory protein, that activates genes responsible for the pathogenicity and for the sexual development of the fungus within the corn plant. This chain is Mating-type locus allele B1 protein, found in Mycosarcoma maydis (Corn smut fungus).